Reading from the N-terminus, the 2072-residue chain is Protein still life, isoform SIF type 1 (2072 aa).

Gly2 carries N-myristoyl glycine lipidation. The WH1 domain occupies 29-147; that stretch reads RRDGHLLSSF…ECCSPSFKFS (119 aa). Disordered stretches follow at residues 153–188, 245–284, 327–355, 459–486, 502–576, 618–655, and 699–747; these read SYSLKLDPPGKGKVKAKRKPLSTPASPSRVRQEPQC, DNVASGGPGTNQGADTLPRQMKGGQQDRQDVANSGVNTNT, EGTQAGGGLHQSVGTCTSSSKGTGTRNKD, NNTMGRASSQSSRFSGSRSSHEIGRGYP, EGSP…SPTS, AKSSTLPLPPHRPLSTIRDKERDRDRDGYYSDRNELIR, and SGSS…YKSA. Polar residues predominate over residues 275–284; that stretch reads VANSGVNTNT. Composition is skewed to low complexity over residues 338 to 351, 459 to 476, and 522 to 553; these read SVGTCTSSSKGTGT, NNTMGRASSQSSRFSGSR, and SSSNGNSDQDQSYGQQQSSGQHPQQQQGPPQR. Residues 564 to 576 show a composition bias toward polar residues; sequence APNVTPTPGSPTS. Positions 634–655 are enriched in basic and acidic residues; the sequence is IRDKERDRDRDGYYSDRNELIR. Residues 732-743 show a composition bias toward polar residues; that stretch reads SLRQDSSLNDSG. Residues 840–958 form the PH domain; sequence TGAVRKAGFL…SIHSACAAAF (119 aa). Positions 1088–1119 are disordered; it reads GRGATKRRPPMLSRSNSGSSRRSMQMNSRDEP. Residues 1100–1114 are compositionally biased toward low complexity; the sequence is SRSNSGSSRRSMQMN. Positions 1121-1188 constitute an RBD domain; the sequence is KTFKVAMPDN…PHRNDLIENY (68 aa). Residues 1204–1293 enclose the PDZ domain; that stretch reads QVELQRTTLE…LSMMMRSSRT (90 aa). Residues 1403 to 1424 are disordered; the sequence is AEQETRKSSPTGSVTSSVSTTA. A compositionally biased stretch (low complexity) spans 1410–1424; it reads SSPTGSVTSSVSTTA. Positions 1436–1630 constitute a DH domain; the sequence is KLRKVVMELV…EKVAEHINEM (195 aa). Disordered regions lie at residues 1803-1832, 1844-2039, and 2051-2072; these read MKNFGGSSGSVSGHSSQGMGSMGYPGNSQT, HGSH…YQPV, and PRDMINLGTDPQSTTRKDDVKN. Low complexity-rich tracts occupy residues 1811–1821 and 1926–1943; these read GSVSGHSSQGM and QQQQQQQQQQQQLMQQGH. Residues 1970 to 1984 show a composition bias toward basic and acidic residues; sequence HSSDIERIDPGTKSE. The segment covering 2007-2022 has biased composition (low complexity); it reads LTLSTTSTLSVGSTGS. The span at 2023 to 2032 shows a compositional bias: polar residues; sequence QARLIQSSHP.

Expressed in both larval and adult brains, mainly in a subset of neurons but not in glia. In the adult eye is expressed in the two primary pigment cells in the subapical region of the eye. Also present in photoreceptors.

It localises to the synapse. Its function is as follows. Regulates synaptic differentiation through the organization of actin cytoskeleton possibly by activating Rho-like GTPases. Is likely a factor in the cascade of Rac1 or Cdc42 in the neurons. May play a role in maintaining proper septate junction functions. Required for eye development and most likely affects corneal lens-formation. The chain is Protein still life, isoform SIF type 1 (sif) from Drosophila melanogaster (Fruit fly).